The chain runs to 431 residues: Glucose-1-phosphate adenylyltransferase (431 aa).

Lysine 39 is a beta-D-fructose 1,6-bisphosphate binding site. The AMP site is built by arginine 40, histidine 46, and arginine 52. Position 114 (tyrosine 114) interacts with alpha-D-glucose 1-phosphate. Arginine 130 lines the AMP pocket. Alpha-D-glucose 1-phosphate is bound by residues glycine 179, 194–195 (EK), and serine 212. AMP-binding residues include glutamate 370 and arginine 386. Beta-D-fructose 1,6-bisphosphate-binding positions include 419 to 423 (REMLR) and 429 to 431 (QER).

The protein belongs to the bacterial/plant glucose-1-phosphate adenylyltransferase family. As to quaternary structure, homotetramer.

It catalyses the reaction alpha-D-glucose 1-phosphate + ATP + H(+) = ADP-alpha-D-glucose + diphosphate. It functions in the pathway glycan biosynthesis; glycogen biosynthesis. Allosterically activated by fructose-1,6-bisphosphate (F16BP) and inhibited by AMP. In terms of biological role, involved in the biosynthesis of ADP-glucose, a building block required for the elongation reactions to produce glycogen. Catalyzes the reaction between ATP and alpha-D-glucose 1-phosphate (G1P) to produce pyrophosphate and ADP-Glc. The polypeptide is Glucose-1-phosphate adenylyltransferase (Salmonella dublin (strain CT_02021853)).